A 227-amino-acid chain; its full sequence is Esterase OVCA2 (227 aa).

A disordered region spans residues 44–68 (GPHPVPDPPGPEGARSDFGSCPPEE). Residues serine 119, aspartate 179, and histidine 206 each act as charge relay system in the active site.

It belongs to the LovG family. In terms of processing, proteolytically degraded in response to RA and 4HPR treatment in a time- and dose-dependent manner in the promyelocytic leukemia cell line HL-60. As to expression, ubiquitously expressed.

The enzyme catalyses a carboxylic ester + H2O = an alcohol + a carboxylate + H(+). Its function is as follows. Exhibits ester hydrolase activity with a strong preference for long-chain alkyl ester substrates and high selectivity against a variety of short, branched, and substituted esters. Is able to hydrolyze ester bonds within a wide range of p-nitrophenyl derivatives (C2-C14) in vitro, with a strong preference toward substrates of &gt;8 carbons. The protein is Esterase OVCA2 of Homo sapiens (Human).